A 453-amino-acid polypeptide reads, in one-letter code: Cysteine--tRNA ligase (453 aa).

Cysteine 30 provides a ligand contact to Zn(2+). The short motif at 32–42 is the 'HIGH' region element; that stretch reads PTVYDRAHLGN. Zn(2+)-binding residues include cysteine 212, histidine 237, and glutamate 241. The 'KMSKS' region signature appears at 268-272; it reads KMSKS. Lysine 271 contributes to the ATP binding site.

Belongs to the class-I aminoacyl-tRNA synthetase family. Monomer. Zn(2+) serves as cofactor.

Its subcellular location is the cytoplasm. It catalyses the reaction tRNA(Cys) + L-cysteine + ATP = L-cysteinyl-tRNA(Cys) + AMP + diphosphate. The polypeptide is Cysteine--tRNA ligase (Jannaschia sp. (strain CCS1)).